Reading from the N-terminus, the 357-residue chain is uncharacterized protein (357 aa).

A Phosphoserine modification is found at serine 72. 3 disordered regions span residues 79 to 98 (GVNE…RPSR), 264 to 290 (QKQL…GASV), and 323 to 357 (ISDE…EPLK). The segment covering 324–335 (SDEDEEDEEEDS) has biased composition (acidic residues).

This is an uncharacterized protein from Saccharomyces cerevisiae (strain ATCC 204508 / S288c) (Baker's yeast).